Consider the following 90-residue polypeptide: NELL2-interacting cell ontogeny regulator 1 (90 aa).

A signal peptide spans methionine 1–alanine 28.

It belongs to the NICOL family. In terms of assembly, interacts with NELL2; triggers epididymal differentiation. Interacts with cell surface receptor TFRC; the interaction mediates uptake of NICOL1 into fibroblasts. In terms of tissue distribution, expression is enriched in both male and female reproductive organs, including the testis, epididymis, seminal vesicles, coagulating glands, ovary and uterus, and in various non-reproductive organs such as brain, thymus and liver. In testis, expressed in both germ cells and Sertoli cells. Also expressed at low levels in the kidney. Expressed during neocortex and cerebellum development.

It localises to the secreted. It is found in the cytoplasm. The protein localises to the perinuclear region. In terms of biological role, mRNA-binding protein which interacts with a range of target mRNAs including SERPINE1, ACTA2, CCN2 and COL4A1 and may promote extracellular matrix production. Binds to the 3'-UTR of SERPINE1 mRNA and stabilizes the mRNA, possibly by competing for binding with SERBP1 and preventing SERBP1-mediated mRNA degradation. Also binds to the 3'-UTR of ACTA2. Testis-derived lumicrine factor that triggers epididymal differentiation and sperm maturation. In Mus musculus (Mouse), this protein is NELL2-interacting cell ontogeny regulator 1.